The sequence spans 366 residues: ACP-SH:acetate ligase (366 aa).

It is found in the cytoplasm. The enzyme catalyses holo-[ACP] + acetate + ATP = acetyl-[ACP] + AMP + diphosphate. Acyl-carrier protein (ACP) acetate ligase of the biotin-dependent malonate decarboxylase multienzyme complex (EC 7.2.4.4). Involved in the conversion of the thiol group of the ACP-bound 2'-(5-phosphoribosyl)-3'-dephospho-CoA prosthetic group into its acetyl thioester using the energy from the hydrolysis of ATP. The chain is ACP-SH:acetate ligase (madH) from Malonomonas rubra.